We begin with the raw amino-acid sequence, 292 residues long: Trimeric intracellular cation channel type B (292 aa).

Residues methionine 1 to serine 16 lie on the Lumenal side of the membrane. The helical transmembrane segment at methionine 17–lysine 34 threads the bilayer. Residues glutamine 35 to proline 47 lie on the Cytoplasmic side of the membrane. A helical transmembrane segment spans residues leucine 48–leucine 69. At alanine 70 to asparagine 82 the chain is on the lumenal side. Residues isoleucine 83–leucine 100 form a helical membrane-spanning segment. The Cytoplasmic segment spans residues valine 101–glutamine 103. The helical transmembrane segment at glycine 104–arginine 122 threads the bilayer. A 1,2-diacyl-sn-glycero-3-phospho-(1D-myo-inositol-4,5-bisphosphate)-binding residues include lysine 118 and arginine 122. Over threonine 123–alanine 140 the chain is Lumenal. The chain crosses the membrane as a helical span at residues tryptophan 141 to valine 158. The Cytoplasmic portion of the chain corresponds to threonine 159–lysine 178. Residues methionine 179–phenylalanine 195 form a helical membrane-spanning segment. The Lumenal segment spans residues glutamine 196–histidine 206. A helical membrane pass occupies residues aspartate 207–methionine 225. Over threonine 226–aspartate 292 the chain is Cytoplasmic. The segment at arginine 248–aspartate 292 is disordered. Residues serine 265–serine 274 show a composition bias toward low complexity.

The protein belongs to the TMEM38 family. In terms of assembly, homotrimer; conformation seems to be controled by binding to diacylglycerol (DAG). Widely expressed.

The protein localises to the endoplasmic reticulum membrane. It carries out the reaction K(+)(in) = K(+)(out). Its activity is regulated as follows. Channel activity is activated by increased cytosolic Ca(2+) levels and blocked by luminal high Ca(2+) levels. Intracellular monovalent cation channel required for maintenance of rapid intracellular calcium release. Acts as a potassium counter-ion channel that functions in synchronization with calcium release from intracellular stores. Activated by increased cytosolic Ca(2+) levels. This chain is Trimeric intracellular cation channel type B (Tmem38b), found in Mus musculus (Mouse).